The chain runs to 274 residues: Diaminopimelate epimerase (274 aa).

2 residues coordinate substrate: Asn11 and Asn62. Cys71 acts as the Proton donor in catalysis. Residues Gly72–Asn73, Asn157, Asn190, and Glu208–Arg209 contribute to the substrate site. The active-site Proton acceptor is Cys217. Position 218-219 (Gly218–Thr219) interacts with substrate.

This sequence belongs to the diaminopimelate epimerase family. As to quaternary structure, homodimer.

It localises to the cytoplasm. The catalysed reaction is (2S,6S)-2,6-diaminopimelate = meso-2,6-diaminopimelate. Its pathway is amino-acid biosynthesis; L-lysine biosynthesis via DAP pathway; DL-2,6-diaminopimelate from LL-2,6-diaminopimelate: step 1/1. In terms of biological role, catalyzes the stereoinversion of LL-2,6-diaminopimelate (L,L-DAP) to meso-diaminopimelate (meso-DAP), a precursor of L-lysine and an essential component of the bacterial peptidoglycan. In Elusimicrobium minutum (strain Pei191), this protein is Diaminopimelate epimerase.